A 433-amino-acid polypeptide reads, in one-letter code: ATP-dependent protease ATPase subunit HslU (433 aa).

Residues valine 18, 60–65 (GVGKTE), aspartate 246, glutamate 311, and arginine 383 each bind ATP.

It belongs to the ClpX chaperone family. HslU subfamily. As to quaternary structure, a double ring-shaped homohexamer of HslV is capped on each side by a ring-shaped HslU homohexamer. The assembly of the HslU/HslV complex is dependent on binding of ATP.

The protein localises to the cytoplasm. ATPase subunit of a proteasome-like degradation complex; this subunit has chaperone activity. The binding of ATP and its subsequent hydrolysis by HslU are essential for unfolding of protein substrates subsequently hydrolyzed by HslV. HslU recognizes the N-terminal part of its protein substrates and unfolds these before they are guided to HslV for hydrolysis. In Rhodopseudomonas palustris (strain BisB5), this protein is ATP-dependent protease ATPase subunit HslU.